A 1288-amino-acid polypeptide reads, in one-letter code: Symplekin (1288 aa).

The interaction with HSF1 stretch occupies residues Met1 to Asn124. The residue at position 13 (Ser13) is a Phosphoserine. HEAT repeat units lie at residues Thr31 to Asn64, Pro67 to Lys101, Ile104 to Lys146, Leu153 to Val192, and Val227 to Gln266. The tract at residues Ile335–Gln392 is disordered. Positions Ser345 to Met360 match the Nuclear localization signal motif. Positions Pro349–Leu362 are enriched in basic and acidic residues. Lys361 participates in a covalent cross-link: Glycyl lysine isopeptide (Lys-Gly) (interchain with G-Cter in SUMO1); alternate. A Glycyl lysine isopeptide (Lys-Gly) (interchain with G-Cter in SUMO2); alternate cross-link involves residue Lys361. Over residues Ser380–Gln392 the composition is skewed to polar residues. Lys483 is covalently cross-linked (Glycyl lysine isopeptide (Lys-Gly) (interchain with G-Cter in SUMO2)). The residue at position 494 (Ser494) is a Phosphoserine. Disordered regions lie at residues Pro1130–Asp1151 and Leu1163–Ser1288. Residues Ala1131–Pro1149 are compositionally biased toward pro residues. A compositionally biased stretch (basic and acidic residues) spans Leu1163–Gln1173. Residues Ser1238 and Ser1239 each carry the phosphoserine modification. A Glycyl lysine isopeptide (Lys-Gly) (interchain with G-Cter in SUMO1) cross-link involves residue Lys1256. Ser1260 is modified (phosphoserine). Residues Ala1267–Ser1288 are compositionally biased toward basic and acidic residues. Position 1274 is a phosphothreonine (Thr1274). Ser1276 is subject to Phosphoserine.

This sequence belongs to the Symplekin family. In terms of assembly, found in a heat-sensitive complex at least composed of several cleavage and polyadenylation specific and cleavage stimulation factors. Interacts with CPSF2, CPSF3 and CSTF2. Interacts (via N-terminus) with HSF1; this interaction is direct and occurs upon heat shock. Interacts with SSU72.

Its subcellular location is the cytoplasm. It is found in the cytoskeleton. It localises to the cell junction. The protein resides in the tight junction. The protein localises to the cell membrane. Its subcellular location is the nucleus. It is found in the nucleoplasm. Its function is as follows. Scaffold protein that functions as a component of a multimolecular complex involved in histone mRNA 3'-end processing. Specific component of the tight junction (TJ) plaque, but might not be an exclusively junctional component. May have a house-keeping rule. Is involved in pre-mRNA polyadenylation. Enhances SSU72 phosphatase activity. The polypeptide is Symplekin (Sympk) (Mus musculus (Mouse)).